Reading from the N-terminus, the 487-residue chain is GTPase Der (487 aa).

Residues 2–166 (LKIAILGRPN…RIKLVANLPE (165 aa)) enclose the EngA-type G 1 domain. GTP is bound by residues 8 to 15 (GRPNVGKS), 55 to 59 (DTGGV), and 118 to 121 (NKAD). Residues 165 to 194 (PEPREEEEEGLEELSVDEHEESEAALPSNT) are disordered. Residues 168–187 (REEEEEGLEELSVDEHEESE) show a composition bias toward acidic residues. Residues 225–398 (LKIALIGRPN…AIDELHHVVS (174 aa)) enclose the EngA-type G 2 domain. GTP is bound by residues 231–238 (GRPNVGKS), 278–282 (DTAGL), and 343–346 (NKWD). One can recognise a KH-like domain in the interval 399-483 (NKVPTPIVNK…PFDLEFKEKP (85 aa)).

This sequence belongs to the TRAFAC class TrmE-Era-EngA-EngB-Septin-like GTPase superfamily. EngA (Der) GTPase family. In terms of assembly, associates with the 50S ribosomal subunit.

GTPase that plays an essential role in the late steps of ribosome biogenesis. The protein is GTPase Der of Chlamydia pneumoniae (Chlamydophila pneumoniae).